The chain runs to 310 residues: Epoxyqueuosine reductase (310 aa).

D133 acts as the Proton donor in catalysis. Positions 179 to 208 (YDNPSDKDYCGTCTRCVDACPTDAILQDNL) constitute a 4Fe-4S ferredoxin-type domain. Residues C188, C191, C194, C198, C214, C241, C244, and C248 each coordinate [4Fe-4S] cluster.

Belongs to the QueG family. In terms of assembly, monomer. Requires cob(II)alamin as cofactor. It depends on [4Fe-4S] cluster as a cofactor.

Its subcellular location is the cytoplasm. The enzyme catalyses epoxyqueuosine(34) in tRNA + AH2 = queuosine(34) in tRNA + A + H2O. It participates in tRNA modification; tRNA-queuosine biosynthesis. In terms of biological role, catalyzes the conversion of epoxyqueuosine (oQ) to queuosine (Q), which is a hypermodified base found in the wobble positions of tRNA(Asp), tRNA(Asn), tRNA(His) and tRNA(Tyr). The protein is Epoxyqueuosine reductase of Cyclobacterium marinum (strain ATCC 25205 / DSM 745 / LMG 13164 / NCIMB 1802) (Flectobacillus marinus).